The following is a 359-amino-acid chain: 3-dehydroquinate synthase (359 aa).

NAD(+) is bound by residues Asp71–Lys76, Gly105–Asp109, Thr129–Thr130, Lys142, and Lys151. Residues Glu184, His247, and His264 each coordinate Zn(2+).

This sequence belongs to the sugar phosphate cyclases superfamily. Dehydroquinate synthase family. Co(2+) is required as a cofactor. Zn(2+) serves as cofactor. The cofactor is NAD(+).

It is found in the cytoplasm. It catalyses the reaction 7-phospho-2-dehydro-3-deoxy-D-arabino-heptonate = 3-dehydroquinate + phosphate. Its pathway is metabolic intermediate biosynthesis; chorismate biosynthesis; chorismate from D-erythrose 4-phosphate and phosphoenolpyruvate: step 2/7. Functionally, catalyzes the conversion of 3-deoxy-D-arabino-heptulosonate 7-phosphate (DAHP) to dehydroquinate (DHQ). This is 3-dehydroquinate synthase from Burkholderia lata (strain ATCC 17760 / DSM 23089 / LMG 22485 / NCIMB 9086 / R18194 / 383).